Here is a 211-residue protein sequence, read N- to C-terminus: N-(5'-phosphoribosyl)anthranilate isomerase (211 aa).

The protein belongs to the TrpF family.

The enzyme catalyses N-(5-phospho-beta-D-ribosyl)anthranilate = 1-(2-carboxyphenylamino)-1-deoxy-D-ribulose 5-phosphate. The protein operates within amino-acid biosynthesis; L-tryptophan biosynthesis; L-tryptophan from chorismate: step 3/5. The polypeptide is N-(5'-phosphoribosyl)anthranilate isomerase (Zymomonas mobilis subsp. mobilis (strain ATCC 31821 / ZM4 / CP4)).